Here is a 125-residue protein sequence, read N- to C-terminus: Small ribosomal subunit protein uS12 (125 aa).

The tract at residues 1–30 is disordered; that stretch reads MPTISQLVRKPRAAKPLKSKVPALGNSPQK. Over residues 9–18 the composition is skewed to basic residues; sequence RKPRAAKPLK. 3-methylthioaspartic acid is present on Asp-89. A disordered region spans residues 103–125; the sequence is DTAGVKDRKQGRSKYGAKKPKSA. Residues 113-125 show a composition bias toward basic residues; it reads GRSKYGAKKPKSA.

Belongs to the universal ribosomal protein uS12 family. Part of the 30S ribosomal subunit. Contacts proteins S8 and S17. May interact with IF1 in the 30S initiation complex.

Its function is as follows. With S4 and S5 plays an important role in translational accuracy. Interacts with and stabilizes bases of the 16S rRNA that are involved in tRNA selection in the A site and with the mRNA backbone. Located at the interface of the 30S and 50S subunits, it traverses the body of the 30S subunit contacting proteins on the other side and probably holding the rRNA structure together. The combined cluster of proteins S8, S12 and S17 appears to hold together the shoulder and platform of the 30S subunit. The sequence is that of Small ribosomal subunit protein uS12 from Nitrosospira multiformis (strain ATCC 25196 / NCIMB 11849 / C 71).